Here is an 86-residue protein sequence, read N- to C-terminus: CLAVATA3/ESR (CLE)-related protein 7 (86 aa).

A signal peptide spans 1–22 (MASKALLLFVMLTFLLVIEMEG). N46 is a glycosylation site (N-linked (GlcNAc...) asparagine). The segment at 63-86 (VDRFSPGGPDPQHHSYPLSSKPRI) is disordered. Hydroxyproline is present on residues P68 and P71. O-linked (Ara...) hydroxyproline glycosylation occurs at P71.

This sequence belongs to the CLV3/ESR signal peptide family. In terms of processing, the O-glycosylation (arabinosylation) of the hydroxyproline Pro-71 enhances binding affinity of the CLE7p peptide for its receptor. In terms of tissue distribution, expressed in roots and seedlings.

It is found in the secreted. It localises to the extracellular space. Functionally, extracellular signal peptide that regulates cell fate. The chain is CLAVATA3/ESR (CLE)-related protein 7 from Arabidopsis thaliana (Mouse-ear cress).